The primary structure comprises 415 residues: Multidrug resistance protein MdtA (415 aa).

A signal peptide spans 1 to 21 (MKGSYKSRWVIVIVVVIAAIA). Residues 34 to 47 (SAAPGATKQAQQSP) are compositionally biased toward polar residues. 2 disordered regions span residues 34-60 (SAAP…GPLA) and 392-415 (EAQS…GARS). Residues 399 to 415 (PEEKATSREYAKKGARS) are compositionally biased toward basic and acidic residues.

The protein belongs to the membrane fusion protein (MFP) (TC 8.A.1) family. Part of a tripartite efflux system composed of MdtA, MdtB and MdtC.

The protein resides in the cell inner membrane. The MdtABC tripartite complex confers resistance against novobiocin and deoxycholate. This Escherichia fergusonii (strain ATCC 35469 / DSM 13698 / CCUG 18766 / IAM 14443 / JCM 21226 / LMG 7866 / NBRC 102419 / NCTC 12128 / CDC 0568-73) protein is Multidrug resistance protein MdtA.